The primary structure comprises 159 residues: U1 small nuclear ribonucleoprotein C (159 aa).

The Matrin-type zinc finger occupies 4-36 (FYCDYCDTYLTHDSPSVRKTHCSGRKHKENVKD). Disordered stretches follow at residues 63 to 95 (PPTP…MPAP) and 139 to 159 (MRPP…RPDR). The span at 77–95 (IPPPPSMGGPPRPGMMPAP) shows a compositional bias: pro residues.

Belongs to the U1 small nuclear ribonucleoprotein C family. Component of the U1 snRNP. The U1 snRNP is composed of the U1 snRNA and the 7 core Sm proteins snrpb, snrpd1, snrpd2, snrpd3, snrpe, snrpf and snrpg that assemble in a heptameric protein ring on the Sm site of the small nuclear RNA to form the core snRNP, and at least 3 U1 snRNP-specific proteins snrnp70/U1-70K, snrpa/U1-A and snrpc/U1-C. snrpc/U1-C interacts with U1 snRNA and the 5' splice-site region of the pre-mRNA.

The protein localises to the nucleus. Functionally, component of the spliceosomal U1 snRNP, which is essential for recognition of the pre-mRNA 5' splice-site and the subsequent assembly of the spliceosome. snrpc/U1-C is directly involved in initial 5' splice-site recognition for both constitutive and regulated alternative splicing. The interaction with the 5' splice-site seems to precede base-pairing between the pre-mRNA and the U1 snRNA. Stimulates commitment or early (E) complex formation by stabilizing the base pairing of the 5' end of the U1 snRNA and the 5' splice-site region. This is U1 small nuclear ribonucleoprotein C from Xenopus tropicalis (Western clawed frog).